The following is a 200-amino-acid chain: Signal peptidase complex catalytic subunit SEC11 (200 aa).

Over 1 to 15 the chain is Cytoplasmic; the sequence is MFAELAPYLSNPRQT. The chain crosses the membrane as a helical; Signal-anchor for type II membrane protein span at residues 16–33; it reads LAQILNFALVLSTAFMGW. Topologically, residues 34–200 are lumenal; that stretch reads KALSVYTNSS…MGVMVMLQRE (167 aa). A glycan (N-linked (GlcNAc...) asparagine) is linked at Asn-41. Active-site charge relay system residues include Ser-53 and His-92. The tract at residues 101-131 is disordered; it reads GDGGKKSQRRLEKEADKRSGPGLSSPISHQM. Over residues 103 to 119 the composition is skewed to basic and acidic residues; the sequence is GGKKSQRRLEKEADKRS. Catalysis depends on Asp-142, which acts as the Charge relay system. Residues 186–197 form a C-terminal short (CTS) helix region; that stretch reads VLLGIMGVMVML.

It belongs to the peptidase S26B family. Component of the signal peptidase complex (SPC) composed of a catalytic subunit SEC11 and three accessory subunits SPC1, SPC2 and SPC3. The complex induces a local thinning of the ER membrane which is used to measure the length of the signal peptide (SP) h-region of protein substrates. This ensures the selectivity of the complex towards h-regions shorter than 18-20 amino acids. SPC associates with the translocon complex.

It localises to the endoplasmic reticulum membrane. The catalysed reaction is Cleavage of hydrophobic, N-terminal signal or leader sequences from secreted and periplasmic proteins.. Catalytic component of the signal peptidase complex (SPC) which catalyzes the cleavage of N-terminal signal sequences from nascent proteins as they are translocated into the lumen of the endoplasmic reticulum. Specifically cleaves N-terminal signal peptides that contain a hydrophobic alpha-helix (h-region) shorter than 18-20 amino acids. This chain is Signal peptidase complex catalytic subunit SEC11 (SEC11), found in Arthroderma gypseum (strain ATCC MYA-4604 / CBS 118893) (Microsporum gypseum).